The primary structure comprises 312 residues: Beta-ketoacyl-[acyl-carrier-protein] synthase III 1 (312 aa).

Residues C113 and H237 contribute to the active site. Positions 238-242 are ACP-binding; it reads QANIR. N267 is a catalytic residue.

The protein belongs to the thiolase-like superfamily. FabH family. Homodimer.

The protein resides in the cytoplasm. It carries out the reaction malonyl-[ACP] + acetyl-CoA + H(+) = 3-oxobutanoyl-[ACP] + CO2 + CoA. It functions in the pathway lipid metabolism; fatty acid biosynthesis. Functionally, catalyzes the condensation reaction of fatty acid synthesis by the addition to an acyl acceptor of two carbons from malonyl-ACP. Catalyzes the first condensation reaction which initiates fatty acid synthesis and may therefore play a role in governing the total rate of fatty acid production. Possesses both acetoacetyl-ACP synthase and acetyl transacylase activities. Its substrate specificity determines the biosynthesis of branched-chain and/or straight-chain of fatty acids. The sequence is that of Beta-ketoacyl-[acyl-carrier-protein] synthase III 1 from Halalkalibacterium halodurans (strain ATCC BAA-125 / DSM 18197 / FERM 7344 / JCM 9153 / C-125) (Bacillus halodurans).